Consider the following 297-residue polypeptide: tRNA-cytidine(32) 2-sulfurtransferase (297 aa).

The PP-loop motif signature appears at 61-66 (SGGKDS). Positions 136, 139, and 227 each coordinate [4Fe-4S] cluster.

Belongs to the TtcA family. In terms of assembly, homodimer. The cofactor is Mg(2+). Requires [4Fe-4S] cluster as cofactor.

It is found in the cytoplasm. The catalysed reaction is cytidine(32) in tRNA + S-sulfanyl-L-cysteinyl-[cysteine desulfurase] + AH2 + ATP = 2-thiocytidine(32) in tRNA + L-cysteinyl-[cysteine desulfurase] + A + AMP + diphosphate + H(+). The protein operates within tRNA modification. Functionally, catalyzes the ATP-dependent 2-thiolation of cytidine in position 32 of tRNA, to form 2-thiocytidine (s(2)C32). The sulfur atoms are provided by the cysteine/cysteine desulfurase (IscS) system. This chain is tRNA-cytidine(32) 2-sulfurtransferase, found in Paracoccus denitrificans (strain Pd 1222).